The following is a 709-amino-acid chain: Molybdenum cofactor sulfurase (709 aa).

Lysine 208 carries the post-translational modification N6-(pyridoxal phosphate)lysine. Residue cysteine 367 is part of the active site. An MOSC domain is found at 563-707; that stretch reads DNALDRQNCR…LESGMSVNFS (145 aa).

Belongs to the class-V pyridoxal-phosphate-dependent aminotransferase family. MOCOS subfamily. Requires pyridoxal 5'-phosphate as cofactor.

It catalyses the reaction Mo-molybdopterin + L-cysteine + AH2 = thio-Mo-molybdopterin + L-alanine + A + H2O. It functions in the pathway cofactor biosynthesis; molybdopterin biosynthesis. Functionally, sulfurates the molybdenum cofactor. Sulfation of molybdenum is essential for xanthine dehydrogenase (XDH) and aldehyde oxidase (ADO) enzymes in which molybdenum cofactor is liganded by 1 oxygen and 1 sulfur atom in active form. The polypeptide is Molybdenum cofactor sulfurase (Caenorhabditis elegans).